The following is a 616-amino-acid chain: MPKYRSATTTHGRNMAGARALWRATGMTDSDFGKPIIAVVNSFTQFVPGHVHLRDLGKLVAEQIEASGGVAKEFNTIAVDDGIAMGHGGMLYSLPSRELIADSVEYMVNAHCADAMVCISNCDKITPGMLMASLRLNIPVIFVSGGPMEAGKTKLSDKIIKLDLVDAMIQGADPKVSDDQSNQVERSACPTCGSCSGMFTANSMNCLTEALGLSQPGNGSLLATHADRKQLFLNAGKRIVELTKRYYEQDDESALPRNIASKAAFENAMTLDIAMGGSTNTVLHLLAAAQEAEIDFTMSDIDKLSRKVPQLCKVAPSTQKYHMEDVHRAGGVLGILGELDRAGLLNRNVKNVLGLTLPQTLEQYDITVTQDEAVKKMFRAGPAGIRTTQAFSQDCRWDSLDDDRAAGCIRSLEYAYSKDGGLAVLYGNFAENGCIVKTAGVDDSILKFTGPAKVYESQDDAVEAILGGKVVEGDVVVIRYEGPKGGPGMQEMLYPTSFLKSMGLGKACALITDGRFSGGTSGLSIGHVSPEAASGGTIALIEDGDTIAIDIPNRSIQLQLSEAEIAARREAQEARGDKAWTPKNRQRQVSFALRAYASLATSADKGAVRDKSKLGG.

Asp81 provides a ligand contact to Mg(2+). Cys122 provides a ligand contact to [2Fe-2S] cluster. Mg(2+) is bound by residues Asp123 and Lys124. Lys124 carries the N6-carboxylysine modification. A [2Fe-2S] cluster-binding site is contributed by Cys195. Glu491 lines the Mg(2+) pocket. Residue Ser517 is the Proton acceptor of the active site.

It belongs to the IlvD/Edd family. As to quaternary structure, homodimer. The cofactor is [2Fe-2S] cluster. It depends on Mg(2+) as a cofactor.

The catalysed reaction is (2R)-2,3-dihydroxy-3-methylbutanoate = 3-methyl-2-oxobutanoate + H2O. The enzyme catalyses (2R,3R)-2,3-dihydroxy-3-methylpentanoate = (S)-3-methyl-2-oxopentanoate + H2O. The protein operates within amino-acid biosynthesis; L-isoleucine biosynthesis; L-isoleucine from 2-oxobutanoate: step 3/4. Its pathway is amino-acid biosynthesis; L-valine biosynthesis; L-valine from pyruvate: step 3/4. Functions in the biosynthesis of branched-chain amino acids. Catalyzes the dehydration of (2R,3R)-2,3-dihydroxy-3-methylpentanoate (2,3-dihydroxy-3-methylvalerate) into 2-oxo-3-methylpentanoate (2-oxo-3-methylvalerate) and of (2R)-2,3-dihydroxy-3-methylbutanoate (2,3-dihydroxyisovalerate) into 2-oxo-3-methylbutanoate (2-oxoisovalerate), the penultimate precursor to L-isoleucine and L-valine, respectively. In Salmonella heidelberg (strain SL476), this protein is Dihydroxy-acid dehydratase.